A 216-amino-acid polypeptide reads, in one-letter code: Large ribosomal subunit protein uL24m (216 aa).

The transit peptide at 1-9 directs the protein to the mitochondrion; the sequence is MRLTLLLEM. In terms of domain architecture, KOW spans 56–89; the sequence is YFRGDTVEVLHGKDAGKQGKVTQVVRARNWVVVD.

The protein belongs to the universal ribosomal protein uL24 family. Component of the mitochondrial ribosome large subunit (39S) which comprises a 16S rRNA and about 50 distinct proteins. In terms of tissue distribution, ubiquitous. Expressed at greater levels in the kidney, adipose tissue, muscle and liver than the brain, heart, ovary and lung.

It is found in the mitochondrion. In Xenopus laevis (African clawed frog), this protein is Large ribosomal subunit protein uL24m (mrpl24).